The sequence spans 773 residues: Disintegrin and metalloproteinase domain-containing protein 11 (773 aa).

The signal sequence occupies residues 1–24 (MRRLRRWAIAALLLLPLLPPPGLG). Positions 25-229 (ALGPRGALHW…PNWPKLRRKR (205 aa)) are excised as a propeptide. Positions 36 to 82 (SSAHVGSPESPEGSEVTEPSRLVRQSSGGEVRKPQLDTRVRQDPPRG) are disordered. The segment covering 65 to 79 (EVRKPQLDTRVRQDP) has biased composition (basic and acidic residues). Asn100 and Asn167 each carry an N-linked (GlcNAc...) asparagine glycan. Residues 230-738 (QVRRGHPTVH…ERYKGPSGTN (509 aa)) are Extracellular-facing. Residues 243-442 (KYVELIVIND…GGGSCLFNKP (200 aa)) enclose the Peptidase M12B domain. A required for localization to cerebellar cortex basket cell terminals. Also required for localization of KCNA1, KCNA2, DLG4 and ADAM22 to cerebellar cortex basket cell terminal perisomatic axons and pinceaux region spans residues 336 to 773 (GRTFQSTSSG…NIRRGRSGGA (438 aa)). Cystine bridges form between Cys353/Cys437, Cys396/Cys421, Cys398/Cys405, and Cys507/Cys527. A Disintegrin domain is found at 448–535 (PPECGNGFVE…QCPPNLHKLD (88 aa)). N-linked (GlcNAc...) asparagine glycans are attached at residues Asn609 and Asn677. Intrachain disulfides connect Cys681/Cys696, Cys690/Cys702, and Cys704/Cys713. One can recognise an EGF-like domain in the interval 681 to 713 (CPGSGERRICSHHGVCSNEGKCICQPDWTGKDC). Residues 739–759 (IIIGSIAGAVLVAAIVLGGTG) form a helical membrane-spanning segment. The Cytoplasmic portion of the chain corresponds to 760 to 773 (WGFKNIRRGRSGGA).

In terms of assembly, interacts with LGI1 and LGI4. Interacts with KCNA1/KV1.1, KCNA2/KV1.2, DLG4/PSD-95 and ADAM22. The precursor is cleaved by a furin endopeptidase. Abundantly expressed in cerebellar cortex basket cell terminals and pinceaux, weakly expressed in Purkinje cells (at protein level). Weakly expressed in the heart. Abundantly in expressed in neurons throughout the central nervous system including the telencephalon, diencephalic and brainstem nuclei, cerebellum and spinal cord. Expressed in the peripheral nervous system trigeminal and dorsal root ganglia. Expressed in the ganglion and bipolar cells of the retinae and weakly in the cornea of the eyes. Expressed in the hepatocytes of the parenchyma and hepatic lobules of the liver. Expressed in distinct focal areas in the juxtamedullary cortex of the kidney. Expressed in spermatocytes in the seminiferous tubules of the testes. Expressed in the stratum spinosum of the stratified squamous epithelia of the tongue and esophagus.

Its subcellular location is the presynaptic cell membrane. It localises to the perikaryon. It is found in the cell projection. The protein localises to the axon. Functionally, probable ligand for integrin in the brain. This is a non catalytic metalloprotease-like protein. Required for localization of the potassium channel subunit proteins KCNA1/KV1.1 and KCNA2/KV1.2 at cerebellar cortex basket cell distal terminals, is thereby involved in ephaptic inhibitory synchronization of Purkinje cell firing and response to stress. Plays a role in spatial learning and motor coordination. Involved in the nociceptive pain response to chemical-derived stimulation. The protein is Disintegrin and metalloproteinase domain-containing protein 11 (Adam11) of Mus musculus (Mouse).